The primary structure comprises 475 residues: Ribulose bisphosphate carboxylase large chain (475 aa).

The propeptide occupies 1 to 2 (MS). Pro3 is subject to N-acetylproline. At Lys14 the chain carries N6,N6,N6-trimethyllysine. The substrate site is built by Asn123 and Thr173. Catalysis depends on Lys175, which acts as the Proton acceptor. Lys177 is a substrate binding site. Mg(2+) is bound by residues Lys201, Asp203, and Glu204. Lys201 is subject to N6-carboxylysine. His294 serves as the catalytic Proton acceptor. Positions 295, 327, and 379 each coordinate substrate.

It belongs to the RuBisCO large chain family. Type I subfamily. Heterohexadecamer of 8 large chains and 8 small chains; disulfide-linked. The disulfide link is formed within the large subunit homodimers. Requires Mg(2+) as cofactor. In terms of processing, the disulfide bond which can form in the large chain dimeric partners within the hexadecamer appears to be associated with oxidative stress and protein turnover.

The protein localises to the plastid. It localises to the chloroplast. It carries out the reaction 2 (2R)-3-phosphoglycerate + 2 H(+) = D-ribulose 1,5-bisphosphate + CO2 + H2O. The catalysed reaction is D-ribulose 1,5-bisphosphate + O2 = 2-phosphoglycolate + (2R)-3-phosphoglycerate + 2 H(+). Functionally, ruBisCO catalyzes two reactions: the carboxylation of D-ribulose 1,5-bisphosphate, the primary event in carbon dioxide fixation, as well as the oxidative fragmentation of the pentose substrate in the photorespiration process. Both reactions occur simultaneously and in competition at the same active site. The chain is Ribulose bisphosphate carboxylase large chain from Tsuga heterophylla (Western hemlock).